A 146-amino-acid polypeptide reads, in one-letter code: Small ribosomal subunit protein eS17 (146 aa).

This sequence belongs to the eukaryotic ribosomal protein eS17 family. In terms of assembly, component of the small ribosomal subunit (SSU). Mature N.crassa ribosomes consist of a small (40S) and a large (60S) subunit. The 40S small subunit contains 1 molecule of ribosomal RNA (18S rRNA) and at least 32 different proteins. The large 60S subunit contains 3 rRNA molecules (26S, 5.8S and 5S rRNA) and at least 42 different proteins.

It localises to the cytoplasm. Functionally, component of the ribosome, a large ribonucleoprotein complex responsible for the synthesis of proteins in the cell. The small ribosomal subunit (SSU) binds messenger RNAs (mRNAs) and translates the encoded message by selecting cognate aminoacyl-transfer RNA (tRNA) molecules. The large subunit (LSU) contains the ribosomal catalytic site termed the peptidyl transferase center (PTC), which catalyzes the formation of peptide bonds, thereby polymerizing the amino acids delivered by tRNAs into a polypeptide chain. The nascent polypeptides leave the ribosome through a tunnel in the LSU and interact with protein factors that function in enzymatic processing, targeting, and the membrane insertion of nascent chains at the exit of the ribosomal tunnel. This Neurospora crassa (strain ATCC 24698 / 74-OR23-1A / CBS 708.71 / DSM 1257 / FGSC 987) protein is Small ribosomal subunit protein eS17 (rps-17).